Here is a 111-residue protein sequence, read N- to C-terminus: UPF0060 membrane protein HCH_03337 (111 aa).

Helical transmembrane passes span 8-28 (LLFAVTAITEIVGCYLPWLVI), 33-53 (SLWLLVPAALSLAIFAWLLTL), 65-85 (YGGMYVVVALIWLHFVEGVGL), and 88-108 (FDFLGATMALAGMAIIALQPI).

It belongs to the UPF0060 family.

The protein resides in the cell inner membrane. This chain is UPF0060 membrane protein HCH_03337, found in Hahella chejuensis (strain KCTC 2396).